A 313-amino-acid polypeptide reads, in one-letter code: Porphobilinogen deaminase (313 aa).

Residue Cys242 is modified to S-(dipyrrolylmethanemethyl)cysteine.

It belongs to the HMBS family. Monomer. It depends on dipyrromethane as a cofactor.

It carries out the reaction 4 porphobilinogen + H2O = hydroxymethylbilane + 4 NH4(+). It participates in porphyrin-containing compound metabolism; protoporphyrin-IX biosynthesis; coproporphyrinogen-III from 5-aminolevulinate: step 2/4. Tetrapolymerization of the monopyrrole PBG into the hydroxymethylbilane pre-uroporphyrinogen in several discrete steps. The chain is Porphobilinogen deaminase from Marinobacter nauticus (strain ATCC 700491 / DSM 11845 / VT8) (Marinobacter aquaeolei).